A 341-amino-acid polypeptide reads, in one-letter code: MTKDILILAVETSCDETSVSVIKNGRDILSNTVLSQIESHKRFGGVVPEVASRHHVEGITTTINEALVDADVSMEDIDAIAVTEGPGLIGALLIGVNAAKALAFAYDKPLIPVHHIAGHIYANHIEDLLTFPLIALIVSGGHTELVYMKDHLTFEVIGETRDDAVGEAYDKVARTIGLNYPGGPQVDRLAAEGEDTYSFPRVWLDKDSYDFSFSGLKSAVINQLHNQRQKNIPIIEANVATSFQNSVVEVLTFKAIQACKEYGVQRLIVAGGVASNKGLRQSLADQCKVNDIQLTIPSPKLCTDNAAMIGVAGHYLYQQGRFADLGLNGHSNIDLEEYSAE.

Fe cation contacts are provided by His115 and His119. Substrate-binding positions include 137–141, Asp170, Gly183, Asp187, and Asn276; that span reads IVSGG. Asp304 lines the Fe cation pocket.

This sequence belongs to the KAE1 / TsaD family. Fe(2+) is required as a cofactor.

It is found in the cytoplasm. The enzyme catalyses L-threonylcarbamoyladenylate + adenosine(37) in tRNA = N(6)-L-threonylcarbamoyladenosine(37) in tRNA + AMP + H(+). Its function is as follows. Required for the formation of a threonylcarbamoyl group on adenosine at position 37 (t(6)A37) in tRNAs that read codons beginning with adenine. Is involved in the transfer of the threonylcarbamoyl moiety of threonylcarbamoyl-AMP (TC-AMP) to the N6 group of A37, together with TsaE and TsaB. TsaD likely plays a direct catalytic role in this reaction. This chain is tRNA N6-adenosine threonylcarbamoyltransferase, found in Staphylococcus aureus (strain bovine RF122 / ET3-1).